Reading from the N-terminus, the 276-residue chain is NH(3)-dependent NAD(+) synthetase (276 aa).

46–53 (GISGGQDS) serves as a coordination point for ATP. D52 is a Mg(2+) binding site. R141 provides a ligand contact to deamido-NAD(+). T161 is a binding site for ATP. Position 166 (E166) interacts with Mg(2+). The deamido-NAD(+) site is built by K174 and D181. Residues K190 and T212 each contribute to the ATP site. 261–262 (HK) lines the deamido-NAD(+) pocket.

It belongs to the NAD synthetase family. Homodimer.

The catalysed reaction is deamido-NAD(+) + NH4(+) + ATP = AMP + diphosphate + NAD(+) + H(+). Its pathway is cofactor biosynthesis; NAD(+) biosynthesis; NAD(+) from deamido-NAD(+) (ammonia route): step 1/1. Its function is as follows. Catalyzes the ATP-dependent amidation of deamido-NAD to form NAD. Uses ammonia as a nitrogen source. This is NH(3)-dependent NAD(+) synthetase from Limosilactobacillus fermentum (strain NBRC 3956 / LMG 18251) (Lactobacillus fermentum).